The sequence spans 290 residues: 33 kDa chaperonin (290 aa).

2 disulfides stabilise this stretch: Cys-235–Cys-237 and Cys-268–Cys-271.

It belongs to the HSP33 family. Under oxidizing conditions two disulfide bonds are formed involving the reactive cysteines. Under reducing conditions zinc is bound to the reactive cysteines and the protein is inactive.

It is found in the cytoplasm. In terms of biological role, redox regulated molecular chaperone. Protects both thermally unfolding and oxidatively damaged proteins from irreversible aggregation. Plays an important role in the bacterial defense system toward oxidative stress. This is 33 kDa chaperonin from Streptococcus pyogenes serotype M4 (strain MGAS10750).